Reading from the N-terminus, the 217-residue chain is Uracil-DNA glycosylase (217 aa).

The active-site Proton acceptor is D62.

It belongs to the uracil-DNA glycosylase (UDG) superfamily. UNG family.

It is found in the cytoplasm. It carries out the reaction Hydrolyzes single-stranded DNA or mismatched double-stranded DNA and polynucleotides, releasing free uracil.. Excises uracil residues from the DNA which can arise as a result of misincorporation of dUMP residues by DNA polymerase or due to deamination of cytosine. This chain is Uracil-DNA glycosylase, found in Streptococcus pyogenes serotype M18 (strain MGAS8232).